The primary structure comprises 234 residues: Large ribosomal subunit protein uL1 (234 aa).

The protein belongs to the universal ribosomal protein uL1 family. Part of the 50S ribosomal subunit.

Functionally, binds directly to 23S rRNA. The L1 stalk is quite mobile in the ribosome, and is involved in E site tRNA release. Protein L1 is also a translational repressor protein, it controls the translation of the L11 operon by binding to its mRNA. In terms of biological role, peptides originating from the N-terminal end of L1 have antibacterial activity against bacteria such as E.coli and B.megaterium and modest antifungal activities. Has no effect on H.pylori itself. Peptides are not hemolytic against mammalian cells. These peptides may be released in the stomach during altruistic lysis to kill other fast growing bacteria. This chain is Large ribosomal subunit protein uL1, found in Helicobacter pylori (strain ATCC 700392 / 26695) (Campylobacter pylori).